Reading from the N-terminus, the 115-residue chain is Large ribosomal subunit protein P2 (115 aa).

Met-1 bears the N-acetylmethionine mark. Position 19 is a phosphoserine (Ser-19). Lys-21 bears the N6-acetyllysine; alternate mark. Lys-21 carries the post-translational modification N6-succinyllysine; alternate. Low complexity predominate over residues 76–90; that stretch reads APGSAAPAAGSAPAA. The tract at residues 76-115 is disordered; the sequence is APGSAAPAAGSAPAAAEEKKDEKKEESEESDDDMGFGLFD. Phosphoserine is present on residues Ser-79 and Ser-86. The span at 91 to 101 shows a compositional bias: basic and acidic residues; it reads AEEKKDEKKEE. Residues Ser-102 and Ser-105 each carry the phosphoserine modification.

It belongs to the eukaryotic ribosomal protein P1/P2 family. Heterodimer with RPLP1 at the lateral ribosomal stalk of the large ribosomal subunit.

Functionally, plays an important role in the elongation step of protein synthesis. This Rattus norvegicus (Rat) protein is Large ribosomal subunit protein P2 (Rplp2).